Here is a 347-residue protein sequence, read N- to C-terminus: N-acetyl-gamma-glutamyl-phosphate reductase (347 aa).

Residue C152 is part of the active site.

It belongs to the NAGSA dehydrogenase family. Type 1 subfamily.

It is found in the cytoplasm. The enzyme catalyses N-acetyl-L-glutamate 5-semialdehyde + phosphate + NADP(+) = N-acetyl-L-glutamyl 5-phosphate + NADPH + H(+). Its pathway is amino-acid biosynthesis; L-arginine biosynthesis; N(2)-acetyl-L-ornithine from L-glutamate: step 3/4. Catalyzes the NADPH-dependent reduction of N-acetyl-5-glutamyl phosphate to yield N-acetyl-L-glutamate 5-semialdehyde. The protein is N-acetyl-gamma-glutamyl-phosphate reductase of Neisseria meningitidis serogroup A / serotype 4A (strain DSM 15465 / Z2491).